Consider the following 254-residue polypeptide: HLA class II histocompatibility antigen, DR alpha chain (254 aa).

A signal peptide spans 1 to 25 (MAISGVPVLGFFIIAVLMSAQESWA). Positions 26–109 (IKEEHVIIQA…KRSNYTPITN (84 aa)) are alpha-1. Over 26 to 216 (IKEEHVIIQA…APSPLPETTE (191 aa)) the chain is Extracellular. N-linked (GlcNAc...) asparagine glycans are attached at residues asparagine 103 and asparagine 143. The interval 110 to 203 (VPPEVTVLTN…GLDEPLLKHW (94 aa)) is alpha-2. The Ig-like C1-type domain maps to 112-204 (PEVTVLTNSP…LDEPLLKHWE (93 aa)). Cysteine 132 and cysteine 188 form a disulfide bridge. The interval 204 to 216 (EFDAPSPLPETTE) is connecting peptide. A helical transmembrane segment spans residues 217–239 (NVVCALGLTVGLVGIIIGTIFII). Over 240 to 254 (KGLRKSNAAERRGPL) the chain is Cytoplasmic. Lysine 244 participates in a covalent cross-link: Glycyl lysine isopeptide (Lys-Gly) (interchain with G-Cter in ubiquitin).

The protein belongs to the MHC class II family. As to quaternary structure, heterotrimer that consists of an alpha chain HLA-DRA, a beta chain HLA-DRB and a peptide (peptide-MHCII). Newly synthesized alpha and beta chains forms a heterodimer (MHCII) that associates with the CD74/invariant chain (Ii) in the endoplasmic reticulum (ER). Ii is a trimer composed of three subunits and each subunit interacts with one MHCII dimer, blocking the peptide-binding cleft. As a result, MHCII molecules cannot bind peptides present in the ER. The complex of MHCII and CD74/Ii is transported in vesicles from ER to Golgi to lysosomes, where it encounters antigenic peptides generated via proteolysis of endocytosed antigens. MHCII dimers are dissociated from CD74/Ii by the combined action of proteolysis and HLA-DM. Lysosomal enzymes such as cathepsin, degrade CD74/Ii leaving a 24 amino acid remnant called class II-associated Ii or CLIP. Interacts (via the peptide binding cleft) with CLIP; this interaction inhibits antigen peptide binding before entry in the endosomal compartment. The displacement of CLIP and replacement by a high affinity peptide in lysosomes is performed by HLA-DM heterodimer. HLA-DM catalyzes CLIP dissociation from MHCII, stabilizes empty MHCII and mediates the selection of high affinity peptides. Interacts with HLA-DM heterodimer; this interaction is direct. Interacts (via alpha-1 domain) with TCR (via CDRs). Interacts (via alpha-2 domain) with CD4 (via Ig-like V-type domain); this interaction increases the affinity of TCR for peptide-MHCII. (Microbial infection) Interacts with Epstein-Barr virus BZLF2/gp42. In terms of assembly, (Microbial infection) Interacts with Staphylococcus aureus enterotoxin A/entA, enterotoxin B/entB, enterotoxin C1/entC1, enterotoxin D/entD, and enterotoxin H/entH. Post-translationally, ubiquitinated by MARCHF1 or MARCHF8 at Lys-244 leading to down-regulation of MHCII. When associated with ubiquitination of the beta chain at 'Lys-254', the down-regulation of MHCII may be highly effective. Expressed in professional APCs: macrophages, dendritic cells and B cells (at protein level). Expressed in thymic epithelial cells (at protein level).

It is found in the cell membrane. It localises to the endoplasmic reticulum membrane. The protein resides in the early endosome membrane. The protein localises to the late endosome membrane. Its subcellular location is the lysosome membrane. It is found in the autolysosome membrane. An alpha chain of antigen-presenting major histocompatibility complex class II (MHCII) molecule. In complex with the beta chain HLA-DRB, displays antigenic peptides on professional antigen presenting cells (APCs) for recognition by alpha-beta T cell receptor (TCR) on HLA-DR-restricted CD4-positive T cells. This guides antigen-specific T-helper effector functions, both antibody-mediated immune response and macrophage activation, to ultimately eliminate the infectious agents and transformed cells. Typically presents extracellular peptide antigens of 10 to 30 amino acids that arise from proteolysis of endocytosed antigens in lysosomes. In the tumor microenvironment, presents antigenic peptides that are primarily generated in tumor-resident APCs likely via phagocytosis of apoptotic tumor cells or macropinocytosis of secreted tumor proteins. Presents peptides derived from intracellular proteins that are trapped in autolysosomes after macroautophagy, a mechanism especially relevant for T cell selection in the thymus and central immune tolerance. The selection of the immunodominant epitopes follows two processing modes: 'bind first, cut/trim later' for pathogen-derived antigenic peptides and 'cut first, bind later' for autoantigens/self-peptides. The anchor residue at position 1 of the peptide N-terminus, usually a large hydrophobic residue, is essential for high affinity interaction with MHCII molecules. This is HLA class II histocompatibility antigen, DR alpha chain (HLA-DRA) from Homo sapiens (Human).